Reading from the N-terminus, the 125-residue chain is Temptin (125 aa).

The first 22 residues, 1–22 (MEQKRTLRVFLAVSLLCALANA), serve as a signal peptide directing secretion. 2 cysteine pairs are disulfide-bonded: cysteine 40–cysteine 125 and cysteine 79–cysteine 99. The tract at residues 78 to 125 (LCDMDSDGDGRSNGVELGDPECVWSQGETPARTTDLSHPGFDEATVSC) is disordered. Polar residues predominate over residues 103–113 (QGETPARTTDL).

Binds to attractin and enticin. Produced by the albumen gland of the egg cordons.

The protein localises to the secreted. In terms of biological role, a component of the complex of water-borne protein pheromones that stimulates attraction and mating behavior. Modulates pheromone signaling by direct binding to attractin. This chain is Temptin, found in Aplysia californica (California sea hare).